Here is a 305-residue protein sequence, read N- to C-terminus: Methionyl-tRNA formyltransferase (305 aa).

108–111 (SLLP) serves as a coordination point for (6S)-5,6,7,8-tetrahydrofolate.

It belongs to the Fmt family.

It carries out the reaction L-methionyl-tRNA(fMet) + (6R)-10-formyltetrahydrofolate = N-formyl-L-methionyl-tRNA(fMet) + (6S)-5,6,7,8-tetrahydrofolate + H(+). Attaches a formyl group to the free amino group of methionyl-tRNA(fMet). The formyl group appears to play a dual role in the initiator identity of N-formylmethionyl-tRNA by promoting its recognition by IF2 and preventing the misappropriation of this tRNA by the elongation apparatus. This Thermus thermophilus (strain ATCC 27634 / DSM 579 / HB8) protein is Methionyl-tRNA formyltransferase.